The sequence spans 198 residues: Prolactin (198 aa).

Cystine bridges form between cysteine 4–cysteine 11, cysteine 58–cysteine 173, and cysteine 190–cysteine 198.

The protein belongs to the somatotropin/prolactin family. Pituitary gland.

It is found in the secreted. The protein is Prolactin of Chelonia mydas (Green sea-turtle).